The following is a 404-amino-acid chain: uncharacterized protein (404 aa).

Positions Val262–Ala278 are enriched in polar residues. Disordered regions lie at residues Val262–Leu307 and Met319–Asp340. Residues Ser268, Ser276, and Ser279 each carry the phosphoserine modification. A phosphothreonine mark is found at Thr290 and Thr293. 5 positions are modified to phosphoserine: Ser304, Ser306, Ser324, Ser358, and Ser362. Positions Met319–Asp336 are enriched in basic and acidic residues.

This is an uncharacterized protein from Mus musculus (Mouse).